Consider the following 133-residue polypeptide: Profilin (133 aa).

This sequence belongs to the profilin family.

Functionally, more likely to influence phosphoinositide metabolism than actin assembly. The chain is Profilin from Camelus.